A 524-amino-acid polypeptide reads, in one-letter code: Probable cytochrome P450 12c1, mitochondrial (524 aa).

C470 serves as a coordination point for heme.

Belongs to the cytochrome P450 family. Heme is required as a cofactor.

It localises to the mitochondrion membrane. The sequence is that of Probable cytochrome P450 12c1, mitochondrial (Cyp12c1) from Drosophila melanogaster (Fruit fly).